A 265-amino-acid chain; its full sequence is Small ribosomal subunit protein uS2 (265 aa).

Positions 226–265 (AAAPNSASVREEEFSAESADEGKGRRAPAKKGDKKADAAE) are disordered. The span at 245 to 265 (DEGKGRRAPAKKGDKKADAAE) shows a compositional bias: basic and acidic residues.

This sequence belongs to the universal ribosomal protein uS2 family.

This Xanthomonas euvesicatoria pv. vesicatoria (strain 85-10) (Xanthomonas campestris pv. vesicatoria) protein is Small ribosomal subunit protein uS2.